Consider the following 88-residue polypeptide: RNA-binding protein Hfq (88 aa).

The region spanning 10–70 is the Sm domain; sequence DRFLNILRTK…ISTILPAEYI (61 aa).

The protein belongs to the Hfq family. In terms of assembly, homohexamer.

In terms of biological role, RNA chaperone that binds small regulatory RNA (sRNAs) and mRNAs to facilitate mRNA translational regulation in response to envelope stress, environmental stress and changes in metabolite concentrations. Also binds with high specificity to tRNAs. This Fervidobacterium nodosum (strain ATCC 35602 / DSM 5306 / Rt17-B1) protein is RNA-binding protein Hfq.